We begin with the raw amino-acid sequence, 156 residues long: MSESAERKSILDVVGIQKLLPHRPPFLLVDRVVEFEAHRRLVALKGVTMNEPFFQGHFPAQPVMPGVLILEALAQAAALLATMSLQPDEVKDKITYLMGIDGARFRRPVVPGDRLELEVEVTKQKGAVWKQTGVARVDGQVVAEAEFMAMLADRER.

His-57 is a catalytic residue.

Belongs to the thioester dehydratase family. FabZ subfamily.

Its subcellular location is the cytoplasm. It catalyses the reaction a (3R)-hydroxyacyl-[ACP] = a (2E)-enoyl-[ACP] + H2O. In terms of biological role, involved in unsaturated fatty acids biosynthesis. Catalyzes the dehydration of short chain beta-hydroxyacyl-ACPs and long chain saturated and unsaturated beta-hydroxyacyl-ACPs. The chain is 3-hydroxyacyl-[acyl-carrier-protein] dehydratase FabZ from Anaeromyxobacter dehalogenans (strain 2CP-1 / ATCC BAA-258).